The primary structure comprises 278 residues: Large ribosomal subunit protein uL2 (278 aa).

Disordered stretches follow at residues 1–58 (MGIR…GGGH) and 210–278 (GRMR…GKKR). Basic and acidic residues predominate over residues 23-33 (EVTRSEPEKSL). Residues 40–49 (SGGRNSTGRI) show a composition bias toward low complexity. 2 stretches are compositionally biased toward basic residues: residues 210–220 (GRMRWKGKRPS) and 269–278 (VRRRRTGKKR).

This sequence belongs to the universal ribosomal protein uL2 family. As to quaternary structure, part of the 50S ribosomal subunit. Forms a bridge to the 30S subunit in the 70S ribosome.

One of the primary rRNA binding proteins. Required for association of the 30S and 50S subunits to form the 70S ribosome, for tRNA binding and peptide bond formation. It has been suggested to have peptidyltransferase activity; this is somewhat controversial. Makes several contacts with the 16S rRNA in the 70S ribosome. The polypeptide is Large ribosomal subunit protein uL2 (Beutenbergia cavernae (strain ATCC BAA-8 / DSM 12333 / CCUG 43141 / JCM 11478 / NBRC 16432 / NCIMB 13614 / HKI 0122)).